The primary structure comprises 116 residues: Small ribosomal subunit protein uS13m (116 aa).

It belongs to the universal ribosomal protein uS13 family. In terms of assembly, part of the small ribosomal subunit.

Its subcellular location is the mitochondrion. Located at the top of the head of the small subunit, it contacts several helices of the 18S rRNA. This Nicotiana tabacum (Common tobacco) protein is Small ribosomal subunit protein uS13m (RPS13).